A 347-amino-acid chain; its full sequence is NADH-ubiquinone oxidoreductase chain 2 (347 aa).

A run of 10 helical transmembrane segments spans residues 3–23 (PLAL…TMMS), 25–45 (HWLT…PILM), 59–79 (YFMT…INLM), 93–115 (VASN…HFWV), 150–170 (NTNL…WGGL), 178–198 (ILAY…PFNP), 200–220 (LTLL…MILA), 240–260 (MTIM…LSGF), 274–294 (NSII…YFYM), and 326–346 (LPTL…ISML).

Belongs to the complex I subunit 2 family. In terms of assembly, core subunit of respiratory chain NADH dehydrogenase (Complex I) which is composed of 45 different subunits. Interacts with TMEM242.

It is found in the mitochondrion inner membrane. The enzyme catalyses a ubiquinone + NADH + 5 H(+)(in) = a ubiquinol + NAD(+) + 4 H(+)(out). Core subunit of the mitochondrial membrane respiratory chain NADH dehydrogenase (Complex I) which catalyzes electron transfer from NADH through the respiratory chain, using ubiquinone as an electron acceptor. Essential for the catalytic activity and assembly of complex I. The sequence is that of NADH-ubiquinone oxidoreductase chain 2 from Mammuthus primigenius (Siberian woolly mammoth).